A 364-amino-acid chain; its full sequence is Dihydroorotate dehydrogenase (quinone) (364 aa).

Residues 61-65 and Ser85 each bind FMN; that span reads AGFDK. Lys65 lines the substrate pocket. Residue 110 to 114 participates in substrate binding; that stretch reads NRMGF. Positions 139 and 170 each coordinate FMN. Position 170 (Asn170) interacts with substrate. Ser173 acts as the Nucleophile in catalysis. Asn175 contributes to the substrate binding site. 2 residues coordinate FMN: Lys214 and Ser242. A substrate-binding site is contributed by 243-244; sequence NT. Residues Gly266, Gly295, and 316 to 317 each bind FMN; that span reads YS.

It belongs to the dihydroorotate dehydrogenase family. Type 2 subfamily. As to quaternary structure, monomer. Requires FMN as cofactor.

It is found in the cell membrane. It catalyses the reaction (S)-dihydroorotate + a quinone = orotate + a quinol. It participates in pyrimidine metabolism; UMP biosynthesis via de novo pathway; orotate from (S)-dihydroorotate (quinone route): step 1/1. Functionally, catalyzes the conversion of dihydroorotate to orotate with quinone as electron acceptor. The chain is Dihydroorotate dehydrogenase (quinone) from Bradyrhizobium sp. (strain ORS 278).